Reading from the N-terminus, the 68-residue chain is DNA-directed RNA polymerase subunit omega (68 aa).

Belongs to the RNA polymerase subunit omega family. In terms of assembly, the RNAP catalytic core consists of 2 alpha, 1 beta, 1 beta' and 1 omega subunit. When a sigma factor is associated with the core the holoenzyme is formed, which can initiate transcription.

It catalyses the reaction RNA(n) + a ribonucleoside 5'-triphosphate = RNA(n+1) + diphosphate. Functionally, promotes RNA polymerase assembly. Latches the N- and C-terminal regions of the beta' subunit thereby facilitating its interaction with the beta and alpha subunits. The chain is DNA-directed RNA polymerase subunit omega from Brevibacillus brevis (strain 47 / JCM 6285 / NBRC 100599).